The following is a 1392-amino-acid chain: Leucine-rich PPR motif-containing protein, mitochondrial (1392 aa).

The transit peptide at 1-77 directs the protein to the mitochondrion; the sequence is MSALLRPARW…LPEEPAPVRR (77 aa). PPR repeat units lie at residues 125 to 159, 160 to 194, 195 to 229, 230 to 264, 265 to 299, 300 to 334, 402 to 436, 437 to 471, 677 to 708, 709 to 745, 746 to 783, 784 to 820, 821 to 856, and 953 to 987; these read LLRS…GTVY, DVSH…NIQP, NRVT…DLPI, TEAV…GIEP, GPDT…DHYF, MDRD…RRSI, HSSS…GFPI, RTHY…GVDP, VGDP…ESDM, VIGG…SAVL, DTAK…IKDA, AVLS…AKPS, SNIS…VLPR, and RDQM…NLIP. N6-acetyllysine is present on residues Lys-151 and Lys-186. Lys-291 carries the N6-acetyllysine modification. At Lys-462 the chain carries N6-acetyllysine. An N6-acetyllysine modification is found at Lys-749. Phosphoserine is present on residues Ser-1025, Ser-1026, and Ser-1028. PPR repeat units follow at residues 1030-1064, 1065-1101, 1102-1136, 1137-1173, 1174-1208, and 1315-1349; these read GDTV…DVVF, SSEA…GFTL, NGAA…EQVP, SELA…IELS, RMVF…ENQT, and NDRV…NMKL. Ser-1137 carries the post-translational modification Phosphoserine.

In terms of assembly, component of mRNP complexes associated with HNRPA1. Component of the complex, at least composed of LRPPRC, BECN1 and BCL2; the interactions prevent BECN1 from forming an autophagy-inducing complex with PIK3C3. Interacts with CECR2, HEBP2, MAP1S, UXT, PPARGC1A and FOXO1. Interacts (via N-terminus) with EIF4E; the interaction promotes association of EIF4E with 4ESE-containing mRNAs. Interacts with exportin XPO1/CRM1; interacts both alone and in complex with EIF4E and 4ESE-containing mRNAs to form an EIF4E-dependent mRNA export complex. Interacts with importin IPO8; the interaction occurs when LRPPRC is in its RNA-free form and returns LRPPRC to the nucleus for further export rounds. Interacts with BECN1. As to expression, widely expressed. Expressed in liver, brain and a subset of small diameter sensory neurons in the dorsal root ganglion (at protein level).

The protein resides in the mitochondrion. It is found in the nucleus. Its subcellular location is the nucleoplasm. It localises to the nucleus inner membrane. The protein localises to the nucleus outer membrane. May play a role in RNA metabolism in both nuclei and mitochondria. In the nucleus binds to HNRPA1-associated poly(A) mRNAs and is part of nmRNP complexes at late stages of mRNA maturation which are possibly associated with nuclear mRNA export. Positively modulates nuclear export of mRNAs containing the EIF4E sensitivity element (4ESE) by binding simultaneously to both EIF4E and the 4ESE and acting as a platform for assembly for the RNA export complex. Also binds to exportin XPO1/CRM1 to engage the nuclear pore and traffic the bound mRNAs to the cytoplasm. May bind mature mRNA in the nucleus outer membrane. In mitochondria binds to poly(A) mRNA. Plays a role in translation or stability of mitochondrially encoded cytochrome c oxidase (COX) subunits. May be involved in transcription regulation. Cooperates with PPARGC1A to regulate certain mitochondrially encoded genes and gluconeogenic genes and may regulate docking of PPARGC1A to transcription factors. Seems to be involved in the transcription regulation of the multidrug-related genes MDR1 and MVP. Part of a nuclear factor that binds to the invMED1 element of MDR1 and MVP gene promoters. Binds single-stranded DNA. Required for maintaining mitochondrial potential. Suppresses the initiation of basal levels of autophagy and mitophagy by sustaining BCL2 levels. This is Leucine-rich PPR motif-containing protein, mitochondrial (Lrpprc) from Rattus norvegicus (Rat).